Here is a 987-residue protein sequence, read N- to C-terminus: Vacuolar membrane protease (987 aa).

Residues 1–14 lie on the Cytoplasmic side of the membrane; it reads MATRKARNPLAFMP. Residues 15 to 35 traverse the membrane as a helical segment; that stretch reads WPVTILTTAMYLALIIPLLVI. At 36 to 384 the chain is on the vacuolar side; sequence HHNVPPAPRT…AFAVFRLHTL (349 aa). 2 N-linked (GlcNAc...) asparagine glycosylation sites follow: Asn51 and Asn117. 2 residues coordinate Zn(2+): His167 and Asp179. Catalysis depends on Glu213, which acts as the Proton acceptor. The Zn(2+) site is built by Glu214, Glu239, and His312. Residues 385 to 405 traverse the membrane as a helical segment; that stretch reads FALSVTLLIVAPLTLLVTSVI. Topologically, residues 406–435 are cytoplasmic; it reads LSRADKMYLFRSSVYSEINDDYIPLRGLRG. Residues 436–456 form a helical membrane-spanning segment; that stretch reads FFRFPFLISIPTGVTVGLAYM. At 457–466 the chain is on the vacuolar side; the sequence is VTKVNPFIAH. The chain crosses the membrane as a helical span at residues 467 to 487; it reads SSSYAVWSMMISAWIFLAWFV. Over 488 to 501 the chain is Cytoplasmic; that stretch reads SRVANSARPSAFHR. Residues 502 to 522 form a helical membrane-spanning segment; the sequence is VYTWTWMFVLTWSLMVVCTVY. The Vacuolar segment spans residues 523–526; it reads EHEE. Residues 527–547 form a helical membrane-spanning segment; it reads GLAGGYFIFFYFAGTFLATWI. Over 548–649 the chain is Cytoplasmic; that stretch reads SYLELFALPT…WSGVLPRWTW (102 aa). Residues 572–600 are disordered; that stretch reads STQGSRLAASGDEHQDDAAEEDPTESTSL. The helical transmembrane segment at 650–670 threads the bilayer; sequence LLQLLITAPVILMLIVPLALL. Residues 671-686 lie on the Vacuolar side of the membrane; the sequence is TTSALSQTGQDGSPQL. The chain crosses the membrane as a helical span at residues 687 to 707; it reads LIYLFISCLTALLFAPMLPFI. The Cytoplasmic segment spans residues 708-715; that stretch reads HRYTYHLP. The helical transmembrane segment at 716-736 threads the bilayer; sequence IFLLFVFIGTMIYNLVAFPFA. The Vacuolar portion of the chain corresponds to 737–987; the sequence is DSNRLKLFFL…KRSSLGALGS (251 aa). Residues Asn781 and Asn871 are each glycosylated (N-linked (GlcNAc...) asparagine).

It belongs to the peptidase M28 family. It depends on Zn(2+) as a cofactor.

Its subcellular location is the vacuole membrane. May be involved in vacuolar sorting and osmoregulation. The protein is Vacuolar membrane protease of Penicillium rubens (strain ATCC 28089 / DSM 1075 / NRRL 1951 / Wisconsin 54-1255) (Penicillium chrysogenum).